We begin with the raw amino-acid sequence, 1050 residues long: DNA polymerase I A, chloroplastic/mitochondrial (1050 aa).

A chloroplast and mitochondrion-targeting transit peptide spans 1–91 (MAMGVSLTSH…VVFNGEWELR (91 aa)). The disordered stretch occupies residues 202-240 (PRKGLDVGDNMDVNPKGEGIQRPLISDKSSGTANGNKNT). A compositionally biased stretch (polar residues) spans 228–240 (DKSSGTANGNKNT). The 179-residue stretch at 312 to 490 (ELICFSIYCG…LYESMTKKLQ (179 aa)) folds into the 3'-5' exonuclease domain. The disordered stretch occupies residues 673–694 (VVEDDDVETSETQKSKTDDETD). A polymerase region spans residues 717–1048 (AIASLCEVCS…DAKCAQNWYA (332 aa)).

Belongs to the DNA polymerase type-A family. As to expression, expressed in shoot apical meristem.

The protein resides in the plastid. The protein localises to the chloroplast. It is found in the mitochondrion. It carries out the reaction DNA(n) + a 2'-deoxyribonucleoside 5'-triphosphate = DNA(n+1) + diphosphate. With respect to regulation, not inhibited by aphidicolin. Its function is as follows. In addition to polymerase activity, this DNA polymerase exhibits 5'-3' exonuclease activity. Required for DNA replication and accumulation in plastids and mitochondria. May be required for DNA repair in both organelles. In Arabidopsis thaliana (Mouse-ear cress), this protein is DNA polymerase I A, chloroplastic/mitochondrial (POLIA).